Consider the following 595-residue polypeptide: Actin-histidine N-methyltransferase (595 aa).

The disordered stretch occupies residues 1–22; the sequence is MGKKSRVKTQKSGTGATATVSP. The segment covering 10–20 has biased composition (polar residues); it reads QKSGTGATATV. S-adenosyl-L-methionine is bound by residues R75, 104–106, R254, 275–279, and 325–327; these read EGF, DMCNH, and SGF. Residues 94–314 enclose the SET domain; sequence EGFEMVNFKE…AGEQIYIFYG (221 aa). Phosphoserine is present on S513. A compositionally biased stretch (polar residues) spans 549-563; it reads ENGLVNGENSIPNGT. The disordered stretch occupies residues 549–595; it reads ENGLVNGENSIPNGTRSEDENLNQEESKRAVEDAKGSSSDRADAVKE. The segment covering 573-595 has biased composition (basic and acidic residues); the sequence is EESKRAVEDAKGSSSDRADAVKE.

This sequence belongs to the class V-like SAM-binding methyltransferase superfamily. SETD3 actin-histidine methyltransferase family. In terms of assembly, interacts with MYOD1. Post-translationally, phosphorylated by GSK3B, which is required for recognition by the SCF(FBXW7) complex and subsequent degradation. Ubiquitinated by the SCF(FBXW7) complex following phosphorylation by GSK3B, leading to its degradation by the proteasome.

Its subcellular location is the cytoplasm. The protein localises to the nucleus. It carries out the reaction L-histidyl-[protein] + S-adenosyl-L-methionine = N(tele)-methyl-L-histidyl-[protein] + S-adenosyl-L-homocysteine + H(+). In terms of biological role, protein-histidine N-methyltransferase that specifically mediates 3-methylhistidine (tele-methylhistidine) methylation of actin at 'His-73'. Histidine methylation of actin is required for smooth muscle contraction of the laboring uterus during delivery. Does not have protein-lysine N-methyltransferase activity and probably only catalyzes histidine methylation of actin. This Callithrix jacchus (White-tufted-ear marmoset) protein is Actin-histidine N-methyltransferase.